A 185-amino-acid chain; its full sequence is Orotate phosphoribosyltransferase (185 aa).

5-phospho-alpha-D-ribose 1-diphosphate-binding positions include Arg-99, Lys-100, Lys-103, and 125-133; that span reads EDVTTTGGS. Residues Thr-129 and Arg-157 each coordinate orotate.

This sequence belongs to the purine/pyrimidine phosphoribosyltransferase family. PyrE subfamily. As to quaternary structure, homodimer. Mg(2+) serves as cofactor.

It carries out the reaction orotidine 5'-phosphate + diphosphate = orotate + 5-phospho-alpha-D-ribose 1-diphosphate. Its pathway is pyrimidine metabolism; UMP biosynthesis via de novo pathway; UMP from orotate: step 1/2. Catalyzes the transfer of a ribosyl phosphate group from 5-phosphoribose 1-diphosphate to orotate, leading to the formation of orotidine monophosphate (OMP). In Methanococcus maripaludis (strain DSM 14266 / JCM 13030 / NBRC 101832 / S2 / LL), this protein is Orotate phosphoribosyltransferase.